The primary structure comprises 207 residues: Ribosomal RNA large subunit methyltransferase E (207 aa).

S-adenosyl-L-methionine-binding residues include glycine 49, tryptophan 51, aspartate 69, aspartate 87, and aspartate 111. The Proton acceptor role is filled by lysine 151.

The protein belongs to the class I-like SAM-binding methyltransferase superfamily. RNA methyltransferase RlmE family.

It is found in the cytoplasm. The enzyme catalyses uridine(2552) in 23S rRNA + S-adenosyl-L-methionine = 2'-O-methyluridine(2552) in 23S rRNA + S-adenosyl-L-homocysteine + H(+). In terms of biological role, specifically methylates the uridine in position 2552 of 23S rRNA at the 2'-O position of the ribose in the fully assembled 50S ribosomal subunit. In Oleidesulfovibrio alaskensis (strain ATCC BAA-1058 / DSM 17464 / G20) (Desulfovibrio alaskensis), this protein is Ribosomal RNA large subunit methyltransferase E.